The chain runs to 244 residues: RNA transcription, translation and transport factor protein (244 aa).

Residues K20, K62, and K98 each carry the N6-acetyllysine modification.

The protein belongs to the RTRAF family. Homodimer. Interacts with FAM98A (via N- and C-terminus). Interacts with NIN; which may prevent phosphorylation of NIN. Interacts with POLR2A. Component of a tRNA-splicing ligase complex with FAM98B, DDX1 and RTCB. As to quaternary structure, (Microbial infection) Interacts with influenza A virus (IAV) RNA polymerase subunits PA, PB1 and PB2, and nucleocapsid NP. Associates with IAV polymerase complexes both in the nucleus and cytosol. Associates with IAV ribonucleoproteins (vRNP) packaged in virions. Interacts with hepatitis C virus core protein p19. As to expression, widely expressed. Expressed at high level in heart and skeletal muscle. Expressed at intermediate level in liver, pancreas, fetal brain and fetal lung. Weakly expressed in adult brain, adult lung, placenta, fetal liver and fetal kidney. Overexpressed in many brain tumors.

Its subcellular location is the nucleus. The protein resides in the cytoplasm. It localises to the cytosol. The protein localises to the perinuclear region. It is found in the cytoskeleton. Its subcellular location is the microtubule organizing center. The protein resides in the centrosome. In terms of biological role, RNA-binding protein involved in modulation of mRNA transcription by Polymerase II. Component of the tRNA-splicing ligase complex and is required for tRNA ligation. May be required for RNA transport. (Microbial infection) In case of infection by influenza virus A (IVA), is involved in viral replication. This is RNA transcription, translation and transport factor protein from Homo sapiens (Human).